Reading from the N-terminus, the 201-residue chain is FMN reductase (NADH) RutF (201 aa).

Positions 169-201 are disordered; sequence APRSGAAPAEPARAARALGARPAEGPALALRSA.

It belongs to the non-flavoprotein flavin reductase family. RutF subfamily.

It carries out the reaction FMNH2 + NAD(+) = FMN + NADH + 2 H(+). Catalyzes the reduction of FMN to FMNH2 which is used to reduce pyrimidine by RutA via the Rut pathway. This chain is FMN reductase (NADH) RutF, found in Methylorubrum extorquens (strain ATCC 14718 / DSM 1338 / JCM 2805 / NCIMB 9133 / AM1) (Methylobacterium extorquens).